Reading from the N-terminus, the 197-residue chain is Segregation and condensation protein B (197 aa).

Belongs to the ScpB family. Homodimer. Homodimerization may be required to stabilize the binding of ScpA to the Smc head domains. Component of a cohesin-like complex composed of ScpA, ScpB and the Smc homodimer, in which ScpA and ScpB bind to the head domain of Smc. The presence of the three proteins is required for the association of the complex with DNA.

The protein resides in the cytoplasm. In terms of biological role, participates in chromosomal partition during cell division. May act via the formation of a condensin-like complex containing Smc and ScpA that pull DNA away from mid-cell into both cell halves. This chain is Segregation and condensation protein B, found in Bacillus pumilus (strain SAFR-032).